The primary structure comprises 71 residues: Protein KleB (71 aa).

The segment at residues 9-28 (VTTNCRRCGKSISTLSRSLI) is a DNA-binding region (H-T-H motif).

This chain is Protein KleB (kleB), found in Escherichia coli.